The primary structure comprises 720 residues: Probable GTPase-activating protein GYL1 (720 aa).

Residue Met-1 is modified to N-acetylmethionine. The span at 1–52 shows a compositional bias: basic and acidic residues; that stretch reads MNSNEDIHEERIEVPRTPHQTQPEKDSDRIALRDEISVPEGDEKAYSDEKVE. The segment at 1–132 is disordered; sequence MNSNEDIHEE…TSPPLPPRAD (132 aa). Phosphothreonine is present on Thr-17. A Phosphoserine modification is found at Ser-37. A compositionally biased stretch (polar residues) spans 54–66; the sequence is ATTNASSNFGSNE. Ser-73 is modified (phosphoserine). Positions 95–108 are enriched in polar residues; the sequence is SKTILPSDDLSQQL. A compositionally biased stretch (basic and acidic residues) spans 111–120; sequence EESKVEEALK. At Ser-139 the chain carries Phosphoserine. Disordered stretches follow at residues 144–164 and 179–210; these read SLPP…RPQL and APHG…PRRI. Polar residues predominate over residues 184 to 196; the sequence is ATPSKSPTSAVGN. The Rab-GAP TBC domain maps to 297-477; sequence GIPAAYRLVV…RIGDMVFLEG (181 aa). Lys-498 participates in a covalent cross-link: Glycyl lysine isopeptide (Lys-Gly) (interchain with G-Cter in SUMO). A coiled-coil region spans residues 572–696; sequence QYKSITEKNL…EIKTANKNGT (125 aa).

This sequence belongs to the GYP5 family. In terms of assembly, interacts with GYP5 and RVS167. Is part of SEC4-containing complexes.

It localises to the cytoplasm. It is found in the bud. Its subcellular location is the bud neck. Its function is as follows. Probable GTPase-activating protein which stimulates the GTP hydrolysis rate by GYP5 of YPT1 and SEC4. Involved in ER to Golgi trafficking and polarized exocytosis. The chain is Probable GTPase-activating protein GYL1 (GYL1) from Saccharomyces cerevisiae (strain ATCC 204508 / S288c) (Baker's yeast).